The sequence spans 636 residues: Chaperone protein HtpG (636 aa).

The a; substrate-binding stretch occupies residues 1–344 (MTLEADKQTH…SADLSLNVSR (344 aa)). The interval 345-561 (EILQSGPVVD…EGDLGLQMRQ (217 aa)) is b. Residues 562–636 (LLEASGQKVP…LNKLLLELSA (75 aa)) form a c region.

The protein belongs to the heat shock protein 90 family. In terms of assembly, homodimer.

It localises to the cytoplasm. Its function is as follows. Molecular chaperone. Has ATPase activity. This is Chaperone protein HtpG from Xylella fastidiosa (strain Temecula1 / ATCC 700964).